The following is a 402-amino-acid chain: D-galactonate dehydratase family member EGBG_02030 (402 aa).

Asp207 provides a ligand contact to Mg(2+). His209 is a binding site for D-arabinonate. The Mg(2+) site is built by Glu233 and Glu259. Residues Glu259, Arg280, His309, and Glu336 each coordinate D-arabinonate.

It belongs to the mandelate racemase/muconate lactonizing enzyme family. GalD subfamily.

In terms of biological role, has no detectable activity with D-mannonate and with a panel of 70 other acid sugars (in vitro), in spite of the conservation of the residues that are expected to be important for catalytic activity and cofactor binding. May have evolved a divergent function. This chain is D-galactonate dehydratase family member EGBG_02030, found in Enterococcus gallinarum (strain EG2).